Here is a 287-residue protein sequence, read N- to C-terminus: ATP synthase gamma chain (287 aa).

This sequence belongs to the ATPase gamma chain family. F-type ATPases have 2 components, CF(1) - the catalytic core - and CF(0) - the membrane proton channel. CF(1) has five subunits: alpha(3), beta(3), gamma(1), delta(1), epsilon(1). CF(0) has three main subunits: a, b and c.

The protein localises to the cell inner membrane. Produces ATP from ADP in the presence of a proton gradient across the membrane. The gamma chain is believed to be important in regulating ATPase activity and the flow of protons through the CF(0) complex. This Enterobacter sp. (strain 638) protein is ATP synthase gamma chain.